We begin with the raw amino-acid sequence, 118 residues long: uncharacterized protein (118 aa).

Residues 95-115 traverse the membrane as a helical segment; it reads IIINLVIILAMYAPEIIGKLL.

The protein belongs to the M.jannaschii MJ0023/MJ0349/MJ1072/MJ1074/MJ1107/MJECL16 family.

The protein resides in the membrane. This is an uncharacterized protein from Methanocaldococcus jannaschii (strain ATCC 43067 / DSM 2661 / JAL-1 / JCM 10045 / NBRC 100440) (Methanococcus jannaschii).